Reading from the N-terminus, the 2507-residue chain is Highly reducing polyketide synthase lcsB (2507 aa).

The Ketosynthase family 3 (KS3) domain occupies Ala2 to Ser393. A disordered region spans residues Asn399 to Glu501. Polar residues-rich tracts occupy residues Ser405–Pro414 and Asn470–Thr488. The malonyl-CoA:ACP transacylase (MAT) domain stretch occupies residues Trp581–Lys900. An N-terminal hotdog fold region spans residues His953 to Ala1080. The segment at His953–Asp1232 is dehydratase (DH) domain. One can recognise a PKS/mFAS DH domain in the interval His953 to Glu1234. The active-site Proton acceptor; for dehydratase activity is His984. The tract at residues Ala1092 to Glu1234 is C-terminal hotdog fold. The active-site Proton donor; for dehydratase activity is Asp1151. Residues Leu1402–Pro1570 are methyltransferase (CMet) domain. The interval Gly1793–Val2105 is enoyl reductase (ER) (ER) domain. Residues Ser2130–Gly2303 are ketoreductase (KR) domain. The region spanning Glu2425–Leu2503 is the Carrier domain. Ser2463 bears the O-(pantetheine 4'-phosphoryl)serine mark.

It functions in the pathway secondary metabolite biosynthesis. Functionally, highly reducing polyketide synthase; part of the gene cluster that mediates the biosynthesis of the lipopeptide antibiotics leucinostatins that show extensive biological activities, including antimalarial, antiviral, antibacterial, antifungal, and antitumor activities, as well as phytotoxic. Leucinostatin A contains nine amino acid residues, including the unusual amino acid 4-methyl-L-proline (MePro), 2-amino-6-hydroxy-4-methyl-8-oxodecanoic acid (AHyMeOA), 3-hydroxyleucine (HyLeu), alpha-aminoisobutyric acid (AIB), beta-Ala, a 4-methylhex-2-enoic acid at the N-terminus as well as a N1,N1-dimethylpropane-1,2-diamine (DPD) at the C-terminus. The biosynthesis of leucinostatins is probably initiated with the assembly of 4-methylhex-2-enoic acid by a reducing PKS. Two reducing polyketide synthases, lcsB and lcsC, have been identified in the cluster and it is not clear which is the one that assembles 4-methylhex-2-enoic acid since both contain KS, AT, DH, cMT, ER, KR and ACP domains. The polyketide residue might be transferred to the NRPS lcsA, mediated by two additional enzymes, the acyl-CoA ligase lcsD and the thioesterase lcsE. The linear polyketide carboxylic acid, which is released from PKS, is converted to a CoA thioester by lcsD, and then lcsE hydrolyzes the thiol bond and shuttles the polyketide intermediate to lcsA. The C domain of the first module catalyzed the condensation of 4-methylhex-2-enoic acid and MePro carried by domain A1, followed by successive condensations of nine amino acids to trigger the elongation of the linear peptide. A5 and A6 domains of lcsA are proposed to incorporate leucine, A2 AHyMeOA, and A3 incorporates HyLeu. A4, A7 and A8 incorporate AIB. The AHyMeOA in leucinostatin A activated by the A2 might be produced by the second PKS (lcsB or lcsC) present within the cluster. The MePro is probably produced via leucine cyclization and may originate from a separate pathway, independent of the cluster. Another nonproteinogenic amino acid, beta-Ala, could be produced by an aspartic acid decarboxylase also localized outside of the cluster. Two candidates are VFPBJ_01400 and VFPBJ_10476. The final peptide scaffold may be released by the NAD(P)H-dependent thioester reductase (TE) at the C-terminal region of lcsA. Transamination of the lcsA product by the transaminase lcsP may produce DPD at the C-terminus. Further hydroxylation steps performed alternatively by the cytochrome P450 monooxygenases lcsI, lcsK andr lcsN then yield the non-methylated leucinostatins precursor. It is also possible that leucines can be hydroxylated prior to their incorporation into the peptide. Varying extents of methylation then lead to the formation of leucinostatins A and B. In Purpureocillium lilacinum (Paecilomyces lilacinus), this protein is Highly reducing polyketide synthase lcsB.